Consider the following 658-residue polypeptide: Exoribonuclease 2 (658 aa).

The RNB domain maps to 189-531; it reads REDLTALHFI…NHRLIKAVLT (343 aa). In terms of domain architecture, S1 motif spans 576–658; that stretch reads KPTFQAEIQD…ETRSIVGTLC (83 aa).

Belongs to the RNR ribonuclease family. RNase II subfamily.

Its subcellular location is the cytoplasm. It carries out the reaction Exonucleolytic cleavage in the 3'- to 5'-direction to yield nucleoside 5'-phosphates.. In terms of biological role, involved in mRNA degradation. Hydrolyzes single-stranded polyribonucleotides processively in the 3' to 5' direction. The sequence is that of Exoribonuclease 2 from Pasteurella multocida (strain Pm70).